The primary structure comprises 427 residues: 3-phosphoshikimate 1-carboxyvinyltransferase (427 aa).

3-phosphoshikimate-binding residues include Lys-22, Ser-23, and Arg-27. Lys-22 serves as a coordination point for phosphoenolpyruvate. Residues Gly-96 and Arg-124 each coordinate phosphoenolpyruvate. Residues Ser-169, Ser-170, Gln-171, Ser-197, Asp-313, Asn-336, and Lys-340 each coordinate 3-phosphoshikimate. Gln-171 contacts phosphoenolpyruvate. Asp-313 acts as the Proton acceptor in catalysis. Phosphoenolpyruvate is bound by residues Arg-344, Arg-386, and Lys-411.

This sequence belongs to the EPSP synthase family. As to quaternary structure, monomer.

It localises to the cytoplasm. It catalyses the reaction 3-phosphoshikimate + phosphoenolpyruvate = 5-O-(1-carboxyvinyl)-3-phosphoshikimate + phosphate. The protein operates within metabolic intermediate biosynthesis; chorismate biosynthesis; chorismate from D-erythrose 4-phosphate and phosphoenolpyruvate: step 6/7. Catalyzes the transfer of the enolpyruvyl moiety of phosphoenolpyruvate (PEP) to the 5-hydroxyl of shikimate-3-phosphate (S3P) to produce enolpyruvyl shikimate-3-phosphate and inorganic phosphate. The polypeptide is 3-phosphoshikimate 1-carboxyvinyltransferase (Escherichia coli O17:K52:H18 (strain UMN026 / ExPEC)).